The sequence spans 435 residues: Glutamyl-tRNA reductase (435 aa).

Substrate is bound by residues 49–52 (TCNR), Ser-109, 114–116 (ETQ), and Gln-120. Cys-50 (nucleophile) is an active-site residue. Position 189–194 (189–194 (GAGEMS)) interacts with NADP(+).

Belongs to the glutamyl-tRNA reductase family. In terms of assembly, homodimer.

It carries out the reaction (S)-4-amino-5-oxopentanoate + tRNA(Glu) + NADP(+) = L-glutamyl-tRNA(Glu) + NADPH + H(+). Its pathway is porphyrin-containing compound metabolism; protoporphyrin-IX biosynthesis; 5-aminolevulinate from L-glutamyl-tRNA(Glu): step 1/2. Functionally, catalyzes the NADPH-dependent reduction of glutamyl-tRNA(Glu) to glutamate 1-semialdehyde (GSA). In Listeria monocytogenes serotype 4a (strain HCC23), this protein is Glutamyl-tRNA reductase.